Consider the following 251-residue polypeptide: 3-deoxy-manno-octulosonate cytidylyltransferase (251 aa).

This sequence belongs to the KdsB family.

It is found in the cytoplasm. It carries out the reaction 3-deoxy-alpha-D-manno-oct-2-ulosonate + CTP = CMP-3-deoxy-beta-D-manno-octulosonate + diphosphate. The protein operates within nucleotide-sugar biosynthesis; CMP-3-deoxy-D-manno-octulosonate biosynthesis; CMP-3-deoxy-D-manno-octulosonate from 3-deoxy-D-manno-octulosonate and CTP: step 1/1. It participates in bacterial outer membrane biogenesis; lipopolysaccharide biosynthesis. In terms of biological role, activates KDO (a required 8-carbon sugar) for incorporation into bacterial lipopolysaccharide in Gram-negative bacteria. In Chlorobium luteolum (strain DSM 273 / BCRC 81028 / 2530) (Pelodictyon luteolum), this protein is 3-deoxy-manno-octulosonate cytidylyltransferase.